The chain runs to 472 residues: Argininosuccinate lyase (472 aa).

Belongs to the lyase 1 family. Argininosuccinate lyase subfamily.

It localises to the cytoplasm. It catalyses the reaction 2-(N(omega)-L-arginino)succinate = fumarate + L-arginine. Its pathway is amino-acid biosynthesis; L-arginine biosynthesis; L-arginine from L-ornithine and carbamoyl phosphate: step 3/3. The chain is Argininosuccinate lyase from Synechococcus sp. (strain CC9311).